A 123-amino-acid chain; its full sequence is ATP synthase epsilon chain (123 aa).

The tract at residues 96 to 123 is disordered; it reads ESRKQSAETEHDKAVAESELRAVKRMEA.

This sequence belongs to the ATPase epsilon chain family. F-type ATPases have 2 components, CF(1) - the catalytic core - and CF(0) - the membrane proton channel. CF(1) has five subunits: alpha(3), beta(3), gamma(1), delta(1), epsilon(1). CF(0) has three main subunits: a, b and c.

The protein resides in the cell membrane. Produces ATP from ADP in the presence of a proton gradient across the membrane. This is ATP synthase epsilon chain from Corynebacterium jeikeium (strain K411).